Reading from the N-terminus, the 314-residue chain is Dual specificity protein phosphatase 2 (314 aa).

The Rhodanese domain occupies 23 to 144; it reads EAERTLLLDC…FQGCCPDLCS (122 aa). The Tyrosine-protein phosphatase domain maps to 172 to 313; sequence GPVEILPYLF…LLQFETQVLC (142 aa). The Phosphocysteine intermediate role is filled by Cys-257.

It belongs to the protein-tyrosine phosphatase family. Non-receptor class dual specificity subfamily. Interacts with MAPK14; this interaction does not lead to catalytic activation of DUSP2 and dephosphrylation of MAPK14. As to expression, expressed in hematopoietic tissues.

It localises to the nucleus. The enzyme catalyses O-phospho-L-tyrosyl-[protein] + H2O = L-tyrosyl-[protein] + phosphate. It catalyses the reaction O-phospho-L-threonyl-[protein] + H2O = L-threonyl-[protein] + phosphate. Functionally, dephosphorylates both phosphorylated Thr and Tyr residues in MAPK1, and dephosphorylation of phosphotyrosine is slightly faster than that of phosphothreonine. Can dephosphorylate MAPK1. This Homo sapiens (Human) protein is Dual specificity protein phosphatase 2.